The sequence spans 480 residues: Cytochrome b-c1 complex subunit 1, mitochondrial (480 aa).

Residues methionine 1–glycine 34 constitute a mitochondrion transit peptide. 2 positions are modified to N6-acetyllysine: lysine 111 and lysine 138. Position 163 is an N6-acetyllysine; alternate (lysine 163). Residue lysine 163 is modified to N6-succinyllysine; alternate. Serine 212 is subject to Phosphoserine. Lysine 248 bears the N6-acetyllysine mark.

The protein belongs to the peptidase M16 family. UQCRC1/QCR1 subfamily. Component of the ubiquinol-cytochrome c oxidoreductase (cytochrome b-c1 complex, complex III, CIII), a multisubunit enzyme composed of 11 subunits. The complex is composed of 3 respiratory subunits cytochrome b, cytochrome c1 and Rieske protein UQCRFS1, 2 core protein subunits UQCRC1/QCR1 and UQCRC2/QCR2, and 6 low-molecular weight protein subunits UQCRH/QCR6, UQCRB/QCR7, UQCRQ/QCR8, UQCR10/QCR9, UQCR11/QCR10 and subunit 9, the cleavage product of Rieske protein UQCRFS1. The complex exists as an obligatory dimer and forms supercomplexes (SCs) in the inner mitochondrial membrane with NADH-ubiquinone oxidoreductase (complex I, CI) and cytochrome c oxidase (complex IV, CIV), resulting in different assemblies (supercomplex SCI(1)III(2)IV(1) and megacomplex MCI(2)III(2)IV(2)). Interacts with UQCC6. Interacts with STMP1.

It is found in the mitochondrion inner membrane. In terms of biological role, component of the ubiquinol-cytochrome c oxidoreductase, a multisubunit transmembrane complex that is part of the mitochondrial electron transport chain which drives oxidative phosphorylation. The respiratory chain contains 3 multisubunit complexes succinate dehydrogenase (complex II, CII), ubiquinol-cytochrome c oxidoreductase (cytochrome b-c1 complex, complex III, CIII) and cytochrome c oxidase (complex IV, CIV), that cooperate to transfer electrons derived from NADH and succinate to molecular oxygen, creating an electrochemical gradient over the inner membrane that drives transmembrane transport and the ATP synthase. The cytochrome b-c1 complex catalyzes electron transfer from ubiquinol to cytochrome c, linking this redox reaction to translocation of protons across the mitochondrial inner membrane, with protons being carried across the membrane as hydrogens on the quinol. In the process called Q cycle, 2 protons are consumed from the matrix, 4 protons are released into the intermembrane space and 2 electrons are passed to cytochrome c. The 2 core subunits UQCRC1/QCR1 and UQCRC2/QCR2 are homologous to the 2 mitochondrial-processing peptidase (MPP) subunits beta-MPP and alpha-MPP respectively, and they seem to have preserved their MPP processing properties. May be involved in the in situ processing of UQCRFS1 into the mature Rieske protein and its mitochondrial targeting sequence (MTS)/subunit 9 when incorporated into complex III. Seems to play an important role in the maintenance of proper mitochondrial function in nigral dopaminergic neurons. This chain is Cytochrome b-c1 complex subunit 1, mitochondrial (UQCRC1), found in Bos taurus (Bovine).